The primary structure comprises 470 residues: Serine/threonine-protein kinase PEPKR2 (470 aa).

The Protein kinase domain occupies 107–355 (YVFGRNIGKG…ADEVLRHPWI (249 aa)). ATP contacts are provided by residues 113–121 (IGKGKFGSV) and lysine 136. Residue aspartate 224 is the Proton acceptor of the active site. Residues 377 to 386 (GSSTCLQNRS) show a composition bias toward polar residues. Disordered stretches follow at residues 377–419 (GSST…EEED) and 441–464 (RSRV…TSTS). Residues 387 to 403 (PTEKTDLNRADREKKIP) are compositionally biased toward basic and acidic residues. Polar residues predominate over residues 445-464 (CSPTNNPIEQQHSSNLTSTS).

The protein belongs to the protein kinase superfamily. Ser/Thr protein kinase family.

The catalysed reaction is L-seryl-[protein] + ATP = O-phospho-L-seryl-[protein] + ADP + H(+). It catalyses the reaction L-threonyl-[protein] + ATP = O-phospho-L-threonyl-[protein] + ADP + H(+). In Arabidopsis thaliana (Mouse-ear cress), this protein is Serine/threonine-protein kinase PEPKR2 (PEPKR2).